The sequence spans 446 residues: MSHEGEEDLLEYSDNEQEIQIDASKAAEAGETGAATSATEGDNNNNTAAGDKKGSYVGIHSTGFKDFLLKPELSRAIIDCGFEHPSEVQQHTIPQSIHGTDVLCQAKSGLGKTAVFVLSTLQQLDPVPGEVAVVVICNARELAYQIRNEYLRFSKYMPDVKTAVFYGGTPISKDAELLKNKDTAPHIVVATPGRLKALVREKYIDLSHVKNFVIDECDKVLEELDMRRDVQEIFRATPRDKQVMMFSATLSQEIRPICRRFLQNPLEIFVDDEAKLTLHGLQQYYIKLEEREKNRKLAQLLDDLEFNQVIIFVKSTTRANELTKLLNASNFPAITVHGHMKQEERIARYKAFKDFEKRICVSTDVFGRGIDIERINLAINYDLTNEADQYLHRVGRAGRFGTKGLAISFVSSKEDEEVLAKIQERFDVKIAEFPEEGIDPSTYLNN.

Residue Ser2 is modified to N-acetylserine. Phosphoserine occurs at positions 13 and 37. The span at 23–41 shows a compositional bias: low complexity; sequence ASKAAEAGETGAATSATEG. The disordered stretch occupies residues 23-52; the sequence is ASKAAEAGETGAATSATEGDNNNNTAAGDK. The Q motif signature appears at 62–90; sequence TGFKDFLLKPELSRAIIDCGFEHPSEVQQ. In terms of domain architecture, Helicase ATP-binding spans 93–268; sequence IPQSIHGTDV…RRFLQNPLEI (176 aa). 106 to 113 provides a ligand contact to ATP; it reads AKSGLGKT. The residue at position 169 (Thr169) is a Phosphothreonine. A DECD box motif is present at residues 215–218; sequence DECD. Positions 280-441 constitute a Helicase C-terminal domain; that stretch reads GLQQYYIKLE…EFPEEGIDPS (162 aa).

It belongs to the DEAD box helicase family. DECD subfamily. As to quaternary structure, component of the TREX complex composed of at least SUB2, TEX1, YRA1 and the four THO complex components: HPR1, MFT1, THO2 and THP1. Interacts with HPR1, YRA1, and YRA2. SUB2 may mediate the interaction between the THO complex and YRA1. Associates with growing mRNP complexes during transcription. This association requires the presence of HPR1. Also interacts with SAC3. Interacts with THO1 in the presence of RNA; this interaction facilitates RNA binding of SUB2.

The protein resides in the nucleus. It carries out the reaction ATP + H2O = ADP + phosphate + H(+). In terms of biological role, ATP-binding RNA helicase component of the TREX complex involved in transcription elongation and required for the export of mRNA out of the nucleus. SUB2 also plays a role in pre-mRNA splicing and spliceosome assembly. May be involved in rDNA and telomeric silencing, and maintenance of genome integrity. Associates with THO1, which facilitates RNA binding of SUB2 and likely plays a role in mRNA export. The sequence is that of ATP-dependent RNA helicase SUB2 (SUB2) from Saccharomyces cerevisiae (strain ATCC 204508 / S288c) (Baker's yeast).